Reading from the N-terminus, the 397-residue chain is pH-sensitive adenylate cyclase MT1302 (397 aa).

A regulatory domain region spans residues 1-191 (MTDHVREADD…IQDMLFMQLR (191 aa)). The interval 192-206 (HMMETEAVNAGERAA) is linker. The interval 211-397 (PGARQVTVAF…QDDDLAGSSP (187 aa)) is catalytic domain. Residues 217–325 (TVAFADLVGF…SPVNVASRVT (109 aa)) enclose the Guanylate cyclase domain. Asp-222 is a Mn(2+) binding site. Lys-261 is a substrate binding site. Asp-265 provides a ligand contact to Mn(2+). ATP is bound at residue Arg-298. Asp-312 lines the substrate pocket.

Belongs to the adenylyl cyclase class-4/guanylyl cyclase family. In terms of assembly, homodimer. Mn(2+) is required as a cofactor. Requires Mg(2+) as cofactor.

The enzyme catalyses ATP = 3',5'-cyclic AMP + diphosphate. Its function is as follows. Catalyzes the formation of the second messenger cAMP. The sequence is that of pH-sensitive adenylate cyclase MT1302 from Mycobacterium tuberculosis (strain CDC 1551 / Oshkosh).